We begin with the raw amino-acid sequence, 96 residues long: UPF0235 protein KPK_0722 (96 aa).

This sequence belongs to the UPF0235 family.

In Klebsiella pneumoniae (strain 342), this protein is UPF0235 protein KPK_0722.